A 701-amino-acid polypeptide reads, in one-letter code: Polyribonucleotide nucleotidyltransferase (701 aa).

Positions 487 and 493 each coordinate Mg(2+). In terms of domain architecture, KH spans 554–613 (PTMIAMKIDTDKIRDVIGKGGATIRAICEETKASIDIEDDGSIKIFGETKEAADAAKQRI). Positions 623 to 691 (GKIYVGKVER…NRGRIKLSIK (69 aa)) constitute an S1 motif domain.

This sequence belongs to the polyribonucleotide nucleotidyltransferase family. As to quaternary structure, component of the RNA degradosome, which is a multiprotein complex involved in RNA processing and mRNA degradation. Mg(2+) is required as a cofactor.

It localises to the cytoplasm. It catalyses the reaction RNA(n+1) + phosphate = RNA(n) + a ribonucleoside 5'-diphosphate. Functionally, involved in mRNA degradation. Catalyzes the phosphorolysis of single-stranded polyribonucleotides processively in the 3'- to 5'-direction. This Pseudomonas entomophila (strain L48) protein is Polyribonucleotide nucleotidyltransferase.